Consider the following 99-residue polypeptide: Small integral membrane protein 9 (99 aa).

Residues 1 to 26 (MEPQKLLIIGFLLCSLTCLLLETVAS) form the signal peptide. Over 27–73 (SPLPLSALGIQEKTGSKPRSGGNHRSWLNNFRDYLWQLIKSALPPAA) the chain is Extracellular. The chain crosses the membrane as a helical span at residues 74–94 (IVAFLLTSALMGILCCFTILV). Topologically, residues 95-99 (VDPVH) are cytoplasmic.

The protein localises to the cell membrane. The protein is Small integral membrane protein 9 (SMIM9) of Homo sapiens (Human).